The primary structure comprises 226 residues: MKNALGWHCALGIIPYRDAWRWQQQLVAERRQNLAAPDVLLTLEHPAIYTLGQGATTAHIHFDPVATGIEVLRIERGGDVTYHCPGQLVAYPILNLRRHCCDLHWYLHQLEEVIIQTLRHYGIKGERVAGLTGVWVEGYKVAAIGIKVTRWISFHGIALNVVNDLKGFGRIVPCGIGDRPVGNLRQFCADIQLEDVRQQFVAAFSRVFGLEFAPKALADLLIPTSS.

The BPL/LPL catalytic domain maps to 34–212; that stretch reads LAAPDVLLTL…AFSRVFGLEF (179 aa). Residues 76 to 83, 143 to 145, and 156 to 158 each bind substrate; these read RGGDVTYH, AIG, and GIA. Cysteine 174 (acyl-thioester intermediate) is an active-site residue.

The protein belongs to the LipB family.

Its subcellular location is the cytoplasm. It catalyses the reaction octanoyl-[ACP] + L-lysyl-[protein] = N(6)-octanoyl-L-lysyl-[protein] + holo-[ACP] + H(+). The protein operates within protein modification; protein lipoylation via endogenous pathway; protein N(6)-(lipoyl)lysine from octanoyl-[acyl-carrier-protein]: step 1/2. Its function is as follows. Catalyzes the transfer of endogenously produced octanoic acid from octanoyl-acyl-carrier-protein onto the lipoyl domains of lipoate-dependent enzymes. Lipoyl-ACP can also act as a substrate although octanoyl-ACP is likely to be the physiological substrate. This chain is Octanoyltransferase, found in Thermosynechococcus vestitus (strain NIES-2133 / IAM M-273 / BP-1).